The sequence spans 837 residues: MSEEEVHDTSSEASEVFTNQPNAFVRGVRSIFGYRKTSLTLFVILTIVVTAGLSFYDNSLELTIELPTSQLEKEILESSWLDLQNIARYPHTYGSRANDQVHDYLEEIIQDMEYDNDGEKIMFESGKGVVSYYESNNLLVRVNGSDGTLPALLLSAHYDSVPSSFGVTDDGMGVASLLGVLRFVAHNQPRRTIIFNFNNNEEFGLFGAHAFVKHPWFKQVGYFLNLEGTGAGGKAVLFRGTDYGIVKNFGGVRYPYATSIFQQGFNNHVIHSETDYKVYKEAGLRGLDLAFYKPRDKYHTGEDNIRNVSPKSLWHMMSNAIDFVQMGVVDDSEEPAVYTTFLGYFFATPISALARVNLVLLVLFPVVSTPLLFVIVKYKKWKLRVTNFLGVPLAMGLAVAVGQVGNPMLVSSHPMMVVATTTSIVVLVYYVVLNGVDWVNTSSDQKLVTMIEVSFVYWVVLVYVTWSGGDHTGEFGVTVLFFVQASTSLLGLIGWTFTRVRGGDEPLLSGEEERYGTEDERDTEKPLVEHNYDWSLQYLLIVPVSSLVVYNSGWLVLEGVNKTVQESLASEHLIYWIVVVFSQFLVLPVVPFITKFNRYIVLGLSVVVVVGVLMSMAVHPFNQGSPMKLRFIERVGQNDMVEVYGRQGFVEDVLSDLPSVKQTQAKLECEALPDGLEVCKYKSGLTPGNLTVEVTTEPRAESYGLISGAITIAAPENRMCTVHFPPDRVKAVVVGKFGNNFKAIPDGFSREKGNYIYKDRNGISQLELYKLDWNKDYHVGFEWLPDIDDEGGMRVEVECFWGDMVPAYQEVVHYSPNWVTWANKERGLVGVVKHVDV.

The Cytoplasmic portion of the chain corresponds to 1–36 (MSEEEVHDTSSEASEVFTNQPNAFVRGVRSIFGYRK). A helical membrane pass occupies residues 37–57 (TSLTLFVILTIVVTAGLSFYD). The Vacuolar portion of the chain corresponds to 58 to 355 (NSLELTIELP…FATPISALAR (298 aa)). An N-linked (GlcNAc...) asparagine glycan is attached at N143. H157 and D169 together coordinate Zn(2+). Catalysis depends on E201, which acts as the Proton acceptor. Zn(2+)-binding residues include E202, E227, and H299. A helical transmembrane segment spans residues 356 to 376 (VNLVLLVLFPVVSTPLLFVIV). The Cytoplasmic segment spans residues 377 to 384 (KYKKWKLR). A helical transmembrane segment spans residues 385–405 (VTNFLGVPLAMGLAVAVGQVG). Residues 406-415 (NPMLVSSHPM) are Vacuolar-facing. The helical transmembrane segment at 416–436 (MVVATTTSIVVLVYYVVLNGV) threads the bilayer. At 437–446 (DWVNTSSDQK) the chain is on the cytoplasmic side. The helical transmembrane segment at 447–467 (LVTMIEVSFVYWVVLVYVTWS) threads the bilayer. The Vacuolar segment spans residues 468-474 (GGDHTGE). The chain crosses the membrane as a helical span at residues 475–495 (FGVTVLFFVQASTSLLGLIGW). Residues 496-539 (TFTRVRGGDEPLLSGEEERYGTEDERDTEKPLVEHNYDWSLQYL) lie on the Cytoplasmic side of the membrane. The chain crosses the membrane as a helical span at residues 540–560 (LIVPVSSLVVYNSGWLVLEGV). N-linked (GlcNAc...) asparagine glycosylation occurs at N561. The Vacuolar portion of the chain corresponds to 561–572 (NKTVQESLASEH). The helical transmembrane segment at 573–593 (LIYWIVVVFSQFLVLPVVPFI) threads the bilayer. Residues 594 to 598 (TKFNR) are Cytoplasmic-facing. The helical transmembrane segment at 599-619 (YIVLGLSVVVVVGVLMSMAVH) threads the bilayer. Residues 620 to 837 (PFNQGSPMKL…LVGVVKHVDV (218 aa)) lie on the Vacuolar side of the membrane. N689 carries N-linked (GlcNAc...) asparagine glycosylation.

The protein belongs to the peptidase M28 family. Zn(2+) is required as a cofactor.

The protein resides in the vacuole membrane. Functionally, may be involved in vacuolar sorting and osmoregulation. The sequence is that of Vacuolar membrane protease from Candida albicans (strain SC5314 / ATCC MYA-2876) (Yeast).